A 3210-amino-acid chain; its full sequence is PF 1022-synthetase (3210 aa).

A condensation 1 region spans residues 68–454 (VDDRRHAIGH…VKELDVVTAE (387 aa)). An adenylation 1 region spans residues 483-876 (AGDPNKAAVF…GRKDSQVKIR (394 aa)). The Carrier 1 domain maps to 1010–1086 (APATGIEVKL…GLVDVIGRDP (77 aa)). The residue at position 1047 (serine 1047) is an O-(pantetheine 4'-phosphoryl)serine. Residues 1104-1534 (SFAQGRLWFL…RTPIAVLPLT (431 aa)) form a condensation 2 region. The segment at 1563–2023 (FRKQVAAHPH…GRMDQQVKIR (461 aa)) is adenylation 2. Residues 2081–2236 (EGWKDFFESN…YLLEVVESLV (156 aa)) form an S-adenosyl-L-methionine-dependent N-methyltransferase region. Carrier domains are found at residues 2570-2644 (DPFV…RQGL) and 2668-2742 (TPSD…RLTQ). An O-(pantetheine 4'-phosphoryl)serine mark is found at serine 2604 and serine 2702. The tract at residues 2788–3203 (LDVYPATQMQ…KRMLEELCGN (416 aa)) is condensation 3. The tract at residues 2976–3002 (VIKGNNNTTPPPPPQQQSTPSGAHHAS) is disordered.

This sequence belongs to the NRP synthetase family. Requires pantetheine 4'-phosphate as cofactor.

It catalyses the reaction 2 (R)-3-phenyllactate + 2 (R)-lactate + 4 L-leucine + 4 S-adenosyl-L-methionine + 8 ATP = PF1022A + 8 AMP + 4 S-adenosyl-L-homocysteine + 8 diphosphate + 8 H(+). The catalysed reaction is 4 (R)-3-phenyllactate + 4 L-leucine + 4 S-adenosyl-L-methionine + 8 ATP = PF1022B + 8 AMP + 4 S-adenosyl-L-homocysteine + 8 diphosphate + 8 H(+). The enzyme catalyses 3 (R)-3-phenyllactate + (R)-lactate + 4 L-leucine + 4 S-adenosyl-L-methionine + 8 ATP = PF1022C + 8 AMP + 4 S-adenosyl-L-homocysteine + 8 diphosphate + 8 H(+). It carries out the reaction (R)-3-phenyllactate + 3 (R)-lactate + 4 L-leucine + 4 S-adenosyl-L-methionine + 8 ATP = PF1022D + 8 AMP + 4 S-adenosyl-L-homocysteine + 8 diphosphate + 8 H(+). It catalyses the reaction 4 (R)-lactate + 4 L-leucine + 4 S-adenosyl-L-methionine + 8 ATP = PF1022F + 8 AMP + 4 S-adenosyl-L-homocysteine + 8 diphosphate + 8 H(+). Nonribosomal peptide synthetase that synthesizes cyclooctadepsipeptides (CODPs) PF 1022 that show powerful broad-spectrum anthelmintic activity with low toxicity in animals. Couples 4 N-methyl-L-leucines and a varying content of alpha-D-hydroxy acids (D-lactates or D-phenyllactates) in an alternative fashion. The enzyme is capable of synthesizing all known natural cyclooctadepsipeptides of the PF1022 type differing in the content of D-lactate and D-phenyllactate, using from 4 D-lactates (PF 1022F) to 4 D-phenyllactates (PF 1022B), respectively. The formation of different PF-related compounds is mainly controlled by the molar ratio of the hydroxy acids. N-methylation of the substrate L-leucine takes place after covalent binding prior to peptide bond formation. In Rosellinia sp. (Mycelia sterilia), this protein is PF 1022-synthetase.